The chain runs to 156 residues: D-aminoacyl-tRNA deacylase (156 aa).

The Gly-cisPro motif, important for rejection of L-amino acids signature appears at 142–143; it reads GP.

Belongs to the DTD family. As to quaternary structure, homodimer.

Its subcellular location is the cytoplasm. The enzyme catalyses glycyl-tRNA(Ala) + H2O = tRNA(Ala) + glycine + H(+). The catalysed reaction is a D-aminoacyl-tRNA + H2O = a tRNA + a D-alpha-amino acid + H(+). Its function is as follows. An aminoacyl-tRNA editing enzyme that deacylates mischarged D-aminoacyl-tRNAs. Also deacylates mischarged glycyl-tRNA(Ala), protecting cells against glycine mischarging by AlaRS. Acts via tRNA-based rather than protein-based catalysis; rejects L-amino acids rather than detecting D-amino acids in the active site. By recycling D-aminoacyl-tRNA to D-amino acids and free tRNA molecules, this enzyme counteracts the toxicity associated with the formation of D-aminoacyl-tRNA entities in vivo and helps enforce protein L-homochirality. This chain is D-aminoacyl-tRNA deacylase, found in Cupriavidus metallidurans (strain ATCC 43123 / DSM 2839 / NBRC 102507 / CH34) (Ralstonia metallidurans).